Here is a 287-residue protein sequence, read N- to C-terminus: Proline iminopeptidase (287 aa).

The region spanning P22–E271 is the AB hydrolase-1 domain. The active-site Nucleophile is S98. The active site involves D238. The active-site Proton donor is H265.

The protein belongs to the peptidase S33 family.

Its subcellular location is the cell envelope. The catalysed reaction is Release of N-terminal proline from a peptide.. In terms of biological role, releases the N-terminal proline from various substrates. In Lactiplantibacillus plantarum (strain ATCC BAA-793 / NCIMB 8826 / WCFS1) (Lactobacillus plantarum), this protein is Proline iminopeptidase.